Here is a 208-residue protein sequence, read N- to C-terminus: N-(5'-phosphoribosyl)anthranilate isomerase (208 aa).

Belongs to the TrpF family.

The enzyme catalyses N-(5-phospho-beta-D-ribosyl)anthranilate = 1-(2-carboxyphenylamino)-1-deoxy-D-ribulose 5-phosphate. It participates in amino-acid biosynthesis; L-tryptophan biosynthesis; L-tryptophan from chorismate: step 3/5. This chain is N-(5'-phosphoribosyl)anthranilate isomerase, found in Staphylococcus haemolyticus (strain JCSC1435).